Here is a 335-residue protein sequence, read N- to C-terminus: Glyceraldehyde-3-phosphate dehydrogenase (335 aa).

NAD(+)-binding positions include 12–13 (RI), aspartate 34, and lysine 79. Residues 150–152 (SCT), threonine 181, 210–211 (TG), and arginine 233 each bind D-glyceraldehyde 3-phosphate. Residue cysteine 151 is the Nucleophile of the active site. Residue asparagine 315 coordinates NAD(+).

This sequence belongs to the glyceraldehyde-3-phosphate dehydrogenase family. As to quaternary structure, homotetramer.

It localises to the cytoplasm. The catalysed reaction is D-glyceraldehyde 3-phosphate + phosphate + NAD(+) = (2R)-3-phospho-glyceroyl phosphate + NADH + H(+). The protein operates within carbohydrate degradation; glycolysis; pyruvate from D-glyceraldehyde 3-phosphate: step 1/5. This is Glyceraldehyde-3-phosphate dehydrogenase (GPD) from Debaryomyces hansenii (strain ATCC 36239 / CBS 767 / BCRC 21394 / JCM 1990 / NBRC 0083 / IGC 2968) (Yeast).